We begin with the raw amino-acid sequence, 434 residues long: Nicotinate phosphoribosyltransferase (434 aa).

Histidine 242 carries the post-translational modification Phosphohistidine; by autocatalysis.

Belongs to the NAPRTase family. Post-translationally, transiently phosphorylated on a His residue during the reaction cycle. Phosphorylation strongly increases the affinity for substrates and increases the rate of nicotinate D-ribonucleotide production. Dephosphorylation regenerates the low-affinity form of the enzyme, leading to product release.

It carries out the reaction nicotinate + 5-phospho-alpha-D-ribose 1-diphosphate + ATP + H2O = nicotinate beta-D-ribonucleotide + ADP + phosphate + diphosphate. Its pathway is cofactor biosynthesis; NAD(+) biosynthesis; nicotinate D-ribonucleotide from nicotinate: step 1/1. Catalyzes the synthesis of beta-nicotinate D-ribonucleotide from nicotinate and 5-phospho-D-ribose 1-phosphate at the expense of ATP. The protein is Nicotinate phosphoribosyltransferase of Rhizobium etli (strain CIAT 652).